A 234-amino-acid chain; its full sequence is MRYGFFDISQDFITIFCPKKTLKNCMFGLIGSRTQATLRQEKNQNFSFFVNEANEIAGFNFFDIKKSFRRGLISHHFTAGLNYPSLKLVKKISELLNYDLTPLAKKVPFVVCEVISAIPIPNTHLKRCKVNTGSNKSLDVVCGADNVRVGLKTVLVHVGGVLPDGTIIKKAKIAGYDSMGMLCSEKELNLKPKNQGIIEIKSHIKIGKSFLDVYLNNSEKFSAWVSTKKRVTGN.

Residues 103-211 (LAKKVPFVVC…SHIKIGKSFL (109 aa)) enclose the tRNA-binding domain.

This is an uncharacterized protein from Mycoplasma pneumoniae (strain ATCC 29342 / M129 / Subtype 1) (Mycoplasmoides pneumoniae).